The primary structure comprises 124 residues: Small ribosomal subunit protein uS12 (124 aa).

A 3-methylthioaspartic acid modification is found at aspartate 89.

Belongs to the universal ribosomal protein uS12 family. Part of the 30S ribosomal subunit. Contacts proteins S8 and S17. May interact with IF1 in the 30S initiation complex.

Its function is as follows. With S4 and S5 plays an important role in translational accuracy. Functionally, interacts with and stabilizes bases of the 16S rRNA that are involved in tRNA selection in the A site and with the mRNA backbone. Located at the interface of the 30S and 50S subunits, it traverses the body of the 30S subunit contacting proteins on the other side and probably holding the rRNA structure together. The combined cluster of proteins S8, S12 and S17 appears to hold together the shoulder and platform of the 30S subunit. The polypeptide is Small ribosomal subunit protein uS12 (Shewanella putrefaciens (strain CN-32 / ATCC BAA-453)).